We begin with the raw amino-acid sequence, 299 residues long: Delta-9 desaturase-like 1 protein (299 aa).

The next 2 membrane-spanning stretches (helical) occupy residues 31–51 (IDIA…LAPF) and 55–75 (WEAL…ITFS). The Histidine box-1 signature appears at 77-82 (HRNLTH). Residues 114 to 118 (HRFHH) carry the Histidine box-2 motif. Helical transmembrane passes span 174-194 (IGLH…LPYL) and 198-218 (VGVG…ACHI). A Histidine box-3 motif is present at residues 246–250 (HNNHH). Residues 262 to 282 (WYQVDLTWYLICFFQALGLAT) traverse the membrane as a helical segment.

This sequence belongs to the fatty acid desaturase type 1 family. Requires Fe cation as cofactor.

The protein localises to the endoplasmic reticulum membrane. The protein operates within lipid metabolism; polyunsaturated fatty acid biosynthesis. This is Delta-9 desaturase-like 1 protein from Arabidopsis thaliana (Mouse-ear cress).